The chain runs to 447 residues: Tubulin beta-2 chain (447 aa).

GTP is bound by residues Gln11, Glu69, Ser138, Gly142, Thr143, Gly144, Asn204, and Asn226. Residue Glu69 coordinates Mg(2+). The segment at 426–447 (QDAGVDEEEEEYEDDAPLEEEV) is disordered. The span at 429–447 (GVDEEEEEYEDDAPLEEEV) shows a compositional bias: acidic residues.

It belongs to the tubulin family. As to quaternary structure, dimer of alpha and beta chains. A typical microtubule is a hollow water-filled tube with an outer diameter of 25 nm and an inner diameter of 15 nM. Alpha-beta heterodimers associate head-to-tail to form protofilaments running lengthwise along the microtubule wall with the beta-tubulin subunit facing the microtubule plus end conferring a structural polarity. Microtubules usually have 13 protofilaments but different protofilament numbers can be found in some organisms and specialized cells. Requires Mg(2+) as cofactor.

The protein resides in the cytoplasm. It is found in the cytoskeleton. Its function is as follows. Tubulin is the major constituent of microtubules, a cylinder consisting of laterally associated linear protofilaments composed of alpha- and beta-tubulin heterodimers. Microtubules grow by the addition of GTP-tubulin dimers to the microtubule end, where a stabilizing cap forms. Below the cap, tubulin dimers are in GDP-bound state, owing to GTPase activity of alpha-tubulin. This chain is Tubulin beta-2 chain (TUB2), found in Colletotrichum graminicola (Maize anthracnose fungus).